Reading from the N-terminus, the 199-residue chain is Outer-membrane lipoprotein LolB (199 aa).

The first 28 residues, 1–28 (MSACPAPRSPFRWLHAFTLCLLLAVLAG), serve as a signal peptide directing secretion. Cys-29 carries the N-palmitoyl cysteine lipid modification. Cys-29 is lipidated: S-diacylglycerol cysteine.

Belongs to the LolB family. In terms of assembly, monomer.

Its subcellular location is the cell outer membrane. Plays a critical role in the incorporation of lipoproteins in the outer membrane after they are released by the LolA protein. This Bordetella bronchiseptica (strain ATCC BAA-588 / NCTC 13252 / RB50) (Alcaligenes bronchisepticus) protein is Outer-membrane lipoprotein LolB.